A 274-amino-acid polypeptide reads, in one-letter code: tRNA-cytidine(32) 2-sulfurtransferase (274 aa).

Positions 40–45 match the PP-loop motif motif; it reads SGGKDS. The [4Fe-4S] cluster site is built by Cys115, Cys118, and Cys206.

It belongs to the TtcA family. As to quaternary structure, homodimer. Requires Mg(2+) as cofactor. [4Fe-4S] cluster serves as cofactor.

The protein resides in the cytoplasm. The catalysed reaction is cytidine(32) in tRNA + S-sulfanyl-L-cysteinyl-[cysteine desulfurase] + AH2 + ATP = 2-thiocytidine(32) in tRNA + L-cysteinyl-[cysteine desulfurase] + A + AMP + diphosphate + H(+). It participates in tRNA modification. Functionally, catalyzes the ATP-dependent 2-thiolation of cytidine in position 32 of tRNA, to form 2-thiocytidine (s(2)C32). The sulfur atoms are provided by the cysteine/cysteine desulfurase (IscS) system. This chain is tRNA-cytidine(32) 2-sulfurtransferase, found in Pseudomonas fluorescens (strain Pf0-1).